The sequence spans 1486 residues: MIERGKFRSLTLINWNGFFARTFDLDELVTTLSGGNGAGKSTTMAAFVTALIPDLTLLHFRNTTEAGATSGSRDKGLHGKLKAGVCYSMLDTINSRHQRVVVGVRLQQVAGRDRKVDIKPFAIQGLPMSVQPTQLVTETLNERQARVLPLNELKDKLEAMEGVQFKQFNSITDYHSLMFDLGIIARRLRSASDRSKFYRLIEASLYGGISSAITRSLRDYLLPENSGVRKAFQDMEAALRENRMTLEAIRVTQSDRDLFKHLISEATNYVAADYMRHANERRVHLDKALEFRRELHTSRQQLAAEQYKHVDMARELAEHNGAEGDLEADYQAASDHLNLVQTALRQQEKIERYEADLDELQIRLEEQNEVVAEAIERQEENEARAEAAELEVDELKSQLADYQQALDVQQTRAIQYNQAIAALNRAKELCHLPDLTADCAAEWLETFQAKELEATEKMLSLEQKMSMAQTAHSQFEQAYQLVVAINGPLARNEAWDVARELLREGVDQRHLAEQVQPLRMRLSELEQRLREQQEAERLLADFCKRQGKNFDIDELEALHQELEARIASLSDSVSNAREERMALRQEQEQLQSRIQSLMQRAPVWLAAQNSLNQLSEQCGEEFTSSQDVTEYLQQLLEREREAIVERDEVGARKNAVDEEIERLSQPGGSEDQRLNALAERFGGVLLSEIYDDVSLEDAPYFSALYGPSRHAIVVPDLSQVTEHLEGLTDCPEDLYLIEGDPQSFDDSVFSVDELEKAVVVKIADRQWRYSRFPEVPLFGRAARESRIESLHAEREVLSERFATLSFDVQKTQRLHQAFSRFIGSHLAVAFESDPEAEIRQLNSRRVELERALSNHENDNQQQRIQFEQAKEGVTALNRILPRLNLLADDSLADRVDEIRERLDEAQEAARFVQQFGNQLAKLEPIVSVLQSDPEQFEQLKEDYAYSQQMQRDARQQAFALTEVVQRRAHFSYSDSAEMLSGNSDLNEKLRERLEQAEAERTRAREALRGHAAQLSQYNQVLASLKSSYDTKKELLNDLQRELQDIGVRADSGAEERARIRRDELHAQLSNNRSRRNQLEKALTFCEAEMDNLTRKLRKLERDYFEMREQVVTAKAGWCAVMRMVKDNGVERRLHRRELAYLSADDLRSMSDKALGALRLAVADNEHLRDVLRMSEDPKRPERKIQFFVAVYQHLRERIRQDIIRTDDPVEAIEQMEIELSRLTEELTSREQKLAISSRSVANIIRKTIQREQNRIRMLNQGLQNVSFGQVNSVRLNVNVRETHAMLLDVLSEQHEQHQDLFNSNRLTFSEALAKLYQRLNPQIDMGQRAPQTIGEELLDYRNYLEMEVEVNRGSDGWLRAESGALSTGEAIGTGMSILVMVVQSWEDESRRLRGKDISPCRLLFLDEAARLDARSIATLFELCERLQMQLIIAAPENISPEKGTTYKLVRKVFQNTEHVHVVGLRGFAPQLPETLPGSDEAPSQAS.

Residue 34 to 41 (GGNGAGKS) participates in ATP binding. 3 coiled-coil regions span residues 326 to 418 (LEAD…QYNQ), 444 to 480 (LETF…QAYQ), and 509 to 603 (RHLA…RAPV). Positions 666–783 (PGGSEDQRLN…EVPLFGRAAR (118 aa)) are flexible hinge. Coiled-coil stretches lie at residues 835-923 (EAEI…AKLE), 977-1115 (EMLS…TAKA), and 1209-1266 (VEAI…QNVS).

The protein belongs to the SMC family. MukB subfamily. Homodimerization via its hinge domain. Binds to DNA via its C-terminal region. Interacts, and probably forms a ternary complex, with MukE and MukF via its C-terminal region. The complex formation is stimulated by calcium or magnesium. Interacts with tubulin-related protein FtsZ.

The protein localises to the cytoplasm. Its subcellular location is the nucleoid. In terms of biological role, plays a central role in chromosome condensation, segregation and cell cycle progression. Functions as a homodimer, which is essential for chromosome partition. Involved in negative DNA supercoiling in vivo, and by this means organize and compact chromosomes. May achieve or facilitate chromosome segregation by condensation DNA from both sides of a centrally located replisome during cell division. This chain is Chromosome partition protein MukB, found in Escherichia coli (strain 55989 / EAEC).